The following is a 465-amino-acid chain: Argininosuccinate lyase (465 aa).

Belongs to the lyase 1 family. Argininosuccinate lyase subfamily.

The protein resides in the cytoplasm. It carries out the reaction 2-(N(omega)-L-arginino)succinate = fumarate + L-arginine. Its pathway is amino-acid biosynthesis; L-arginine biosynthesis; L-arginine from L-ornithine and carbamoyl phosphate: step 3/3. This chain is Argininosuccinate lyase, found in Clostridium botulinum (strain Eklund 17B / Type B).